A 255-amino-acid chain; its full sequence is MASNNDSIKKTLFVVIALSLVCSIIVSTAAVGLRDKQKVNAVLDKQSKIVEVAGINESGSVPELFAKYIEPRLIDFKTGNFVDGDATAYDQRKASKDPAQSIKLTAEQDKAKIIRRANTGVVYLVKSGDEISKVIVPVHGNGLWSMMYAFVAVETDGNTVSGITYYEQGETPGLGGEVENPSWRAQFVGKKLFDDNHQPAIKVVKGGAPAGSEHGVDGLSGATLTSNGVQHTFDFWLGDMGFGPFLAKVRDGGLN.

Residues 12–32 form a helical membrane-spanning segment; sequence LFVVIALSLVCSIIVSTAAVG. At Thr223 the chain carries FMN phosphoryl threonine.

This sequence belongs to the NqrC family. In terms of assembly, composed of six subunits; NqrA, NqrB, NqrC, NqrD, NqrE and NqrF. FMN serves as cofactor.

The protein localises to the cell inner membrane. It carries out the reaction a ubiquinone + n Na(+)(in) + NADH + H(+) = a ubiquinol + n Na(+)(out) + NAD(+). Its function is as follows. NQR complex catalyzes the reduction of ubiquinone-1 to ubiquinol by two successive reactions, coupled with the transport of Na(+) ions from the cytoplasm to the periplasm. NqrA to NqrE are probably involved in the second step, the conversion of ubisemiquinone to ubiquinol. This Vibrio anguillarum (Listonella anguillarum) protein is Na(+)-translocating NADH-quinone reductase subunit C.